Consider the following 110-residue polypeptide: U1-lycotoxin-Ls1hh (110 aa).

A signal peptide spans 1–20 (MKFVLLFGVLLVTLFSYSSA). Residues 21–44 (EMLDDFDQADEDELLSLIEKEEAR) constitute a propeptide that is removed on maturation. Cystine bridges form between cysteine 47/cysteine 62, cysteine 54/cysteine 71, cysteine 61/cysteine 89, and cysteine 73/cysteine 87.

This sequence belongs to the neurotoxin 19 (CSTX) family. 03 subfamily. Expressed by the venom gland.

It is found in the secreted. The polypeptide is U1-lycotoxin-Ls1hh (Lycosa singoriensis (Wolf spider)).